An 828-amino-acid chain; its full sequence is Outer membrane usher protein MrkC (828 aa).

The first 18 residues, 1–18 (MKQRSICPGRLSTAIAVA), serve as a signal peptide directing secretion. Cysteines 813 and 827 form a disulfide.

Belongs to the fimbrial export usher family.

It is found in the cell outer membrane. Involved in the export and assembly of the type 3 fimbrial subunit (MrkA). The chain is Outer membrane usher protein MrkC (mrkC) from Klebsiella pneumoniae.